The sequence spans 274 residues: Large ribosomal subunit protein uL2 (274 aa).

Disordered regions lie at residues 28-54 (APHAPLLEKKSKTGGRNNNGRITTRHI) and 224-274 (VAMN…RRRK). The segment covering 263–274 (KRTDKMIVRRRK) has biased composition (basic and acidic residues).

The protein belongs to the universal ribosomal protein uL2 family. As to quaternary structure, part of the 50S ribosomal subunit. Forms a bridge to the 30S subunit in the 70S ribosome.

Its function is as follows. One of the primary rRNA binding proteins. Required for association of the 30S and 50S subunits to form the 70S ribosome, for tRNA binding and peptide bond formation. It has been suggested to have peptidyltransferase activity; this is somewhat controversial. Makes several contacts with the 16S rRNA in the 70S ribosome. The chain is Large ribosomal subunit protein uL2 from Pseudomonas fluorescens (strain SBW25).